The sequence spans 194 residues: Imidazoleglycerol-phosphate dehydratase (194 aa).

Belongs to the imidazoleglycerol-phosphate dehydratase family.

It localises to the cytoplasm. The enzyme catalyses D-erythro-1-(imidazol-4-yl)glycerol 3-phosphate = 3-(imidazol-4-yl)-2-oxopropyl phosphate + H2O. Its pathway is amino-acid biosynthesis; L-histidine biosynthesis; L-histidine from 5-phospho-alpha-D-ribose 1-diphosphate: step 6/9. The chain is Imidazoleglycerol-phosphate dehydratase from Bacillus velezensis (strain DSM 23117 / BGSC 10A6 / LMG 26770 / FZB42) (Bacillus amyloliquefaciens subsp. plantarum).